The chain runs to 450 residues: Probable rhamnogalacturonase E (450 aa).

An N-terminal signal peptide occupies residues 1–22; it reads MTWSTSFLSVHFFAFITTSIHA. A disulfide bridge links cysteine 43 with cysteine 69. Asparagine 54, asparagine 92, and asparagine 131 each carry an N-linked (GlcNAc...) asparagine glycan. Catalysis depends on aspartate 222, which acts as the Proton donor. Residues cysteine 224 and cysteine 241 are joined by a disulfide bond. 2 N-linked (GlcNAc...) asparagine glycosylation sites follow: asparagine 242 and asparagine 257. Histidine 297 is an active-site residue. Residues asparagine 324 and asparagine 329 are each glycosylated (N-linked (GlcNAc...) asparagine). Disulfide bonds link cysteine 347-cysteine 353 and cysteine 375-cysteine 384.

This sequence belongs to the glycosyl hydrolase 28 family.

It is found in the secreted. Pectinolytic enzymes consist of four classes of enzymes: pectine lyase, polygalacturonase, pectin methylesterase and rhamnogalacturonase. Hydrolyzes alpha-D-galacturonopyranosyl-(1,2)-alpha-L-rhamnopyranosyl linkages in the backbone of the hairy regions of pectins. The sequence is that of Probable rhamnogalacturonase E (rhgE) from Aspergillus niger.